A 108-amino-acid chain; its full sequence is TYRO protein tyrosine kinase-binding protein (108 aa).

A signal peptide spans 1-25; the sequence is MEGLRPSDRLLSLLLTVGGLSLVLA. At 26–36 the chain is on the extracellular side; that stretch reads QSECNCSSVSP. Residues 37 to 57 traverse the membrane as a helical segment; that stretch reads GVLAGIVLGDLMLTLLIALAV. Residue aspartate 46 coordinates Ca(2+). Over 58–108 the chain is Cytoplasmic; that stretch reads YYLGRLVPRGRGATEVTRKQHIPETESPYQELQGQRTDVYSDLNTQRPYYK. A disordered region spans residues 71–108; the sequence is TEVTRKQHIPETESPYQELQGQRTDVYSDLNTQRPYYK. Residues 75–103 enclose the ITAM domain; that stretch reads RKQHIPETESPYQELQGQRTDVYSDLNTQ. A compositionally biased stretch (polar residues) spans 84-108; it reads SPYQELQGQRTDVYSDLNTQRPYYK. Phosphotyrosine occurs at positions 86 and 97.

This sequence belongs to the TYROBP family. In terms of assembly, homodimer; disulfide-linked. Homotrimer; disulfide-linked. Homotetramer; disulfide-linked. Homotrimers and homotetramers form when low levels of partner receptors are available and is competitive with assembly with interacting receptors. They may represent alternative oligomerization states or may be intermediates in the receptor assembly process. Binding of a metal cation aids in homooligomerization through coordination of the metal ion by the subunits of the oligomer. Interacts with TREM1. Interacts with TREM2. Interacts with CLECSF5. Interacts with CD300LB and CD300C2. Interacts with CD300E. Interacts (via ITAM domain) with SYK (via SH2 domains); activates SYK mediating neutrophils and macrophages integrin-mediated activation. Interacts with KLRC2. Interacts with CD300H. Interacts with KLRD1. Interacts with SIGLEC1. Post-translationally, following ligand binding by associated receptors, tyrosine phosphorylated in the ITAM domain which leads to activation of additional tyrosine kinases and subsequent cell activation.

The protein localises to the cell membrane. Functionally, adapter protein which non-covalently associates with activating receptors found on the surface of a variety of immune cells to mediate signaling and cell activation following ligand binding by the receptors. TYROBP is tyrosine-phosphorylated in the ITAM domain following ligand binding by the associated receptors which leads to activation of additional tyrosine kinases and subsequent cell activation. Also has an inhibitory role in some cells. Non-covalently associates with activating receptors of the CD300 family to mediate cell activation. Also mediates cell activation through association with activating receptors of the CD200R family. Required for neutrophil activation mediated by integrin. Required for the activation of myeloid cells mediated by the CLEC5A/MDL1 receptor. Associates with natural killer (NK) cell receptors such as the KLRD1/KLRC2 heterodimer to mediate NK cell activation. Associates with TREM1 to mediate activation of neutrophils and monocytes. Associates with TREM2 on monocyte-derived dendritic cells to mediate up-regulation of chemokine receptor CCR7 and dendritic cell maturation and survival. Association with TREM2 mediates cytokine-induced formation of multinucleated giant cells which are formed by the fusion of macrophages. Stabilizes the TREM2 C-terminal fragment (TREM2-CTF) produced by TREM2 ectodomain shedding which suppresses the release of pro-inflammatory cytokines. In microglia, required with TREM2 for phagocytosis of apoptotic neurons. Required with ITGAM/CD11B in microglia to control production of microglial superoxide ions which promote the neuronal apoptosis that occurs during brain development. Promotes pro-inflammatory responses in microglia following nerve injury which accelerates degeneration of injured neurons. Positively regulates the expression of the IRAK3/IRAK-M kinase and IL10 production by liver dendritic cells and inhibits their T cell allosimulatory ability. Negatively regulates B cell proliferation. Required for CSF1-mediated osteoclast cytoskeletal organization. Positively regulates multinucleation during osteoclast development. This is TYRO protein tyrosine kinase-binding protein from Bos taurus (Bovine).